The sequence spans 730 residues: Polyphosphate kinase (730 aa).

Over residues 1-21 (MMRHDRNVTEIDAETRPDENL) the composition is skewed to basic and acidic residues. The segment at 1–39 (MMRHDRNVTEIDAETRPDENLWHSGDSAVGAPPAATPAA) is disordered. Residue Asn86 participates in ATP binding. Positions 423 and 453 each coordinate Mg(2+). His483 serves as the catalytic Phosphohistidine intermediate. Tyr516, Arg612, and His640 together coordinate ATP.

It belongs to the polyphosphate kinase 1 (PPK1) family. Mg(2+) serves as cofactor. In terms of processing, an intermediate of this reaction is the autophosphorylated ppk in which a phosphate is covalently linked to a histidine residue through a N-P bond.

The enzyme catalyses [phosphate](n) + ATP = [phosphate](n+1) + ADP. Catalyzes the reversible transfer of the terminal phosphate of ATP to form a long-chain polyphosphate (polyP). The polypeptide is Polyphosphate kinase (Mycolicibacterium paratuberculosis (strain ATCC BAA-968 / K-10) (Mycobacterium paratuberculosis)).